Consider the following 256-residue polypeptide: Hydroxyacylglutathione hydrolase (256 aa).

Zn(2+) is bound by residues histidine 57, histidine 59, aspartate 61, histidine 62, histidine 115, aspartate 134, and histidine 172.

The protein belongs to the metallo-beta-lactamase superfamily. Glyoxalase II family. In terms of assembly, monomer. It depends on Zn(2+) as a cofactor.

It carries out the reaction an S-(2-hydroxyacyl)glutathione + H2O = a 2-hydroxy carboxylate + glutathione + H(+). It participates in secondary metabolite metabolism; methylglyoxal degradation; (R)-lactate from methylglyoxal: step 2/2. In terms of biological role, thiolesterase that catalyzes the hydrolysis of S-D-lactoyl-glutathione to form glutathione and D-lactic acid. The chain is Hydroxyacylglutathione hydrolase from Rhizobium etli (strain ATCC 51251 / DSM 11541 / JCM 21823 / NBRC 15573 / CFN 42).